A 301-amino-acid chain; its full sequence is NADH-cytochrome b5 reductase 3 (301 aa).

Gly2 is lipidated: N-myristoyl glycine. The FAD-binding FR-type domain maps to 40-152 (DIKYPLRLID…RGPNGLLVYQ (113 aa)). Lys42 carries the N6-acetyllysine modification. Position 43 is a phosphotyrosine (Tyr43). Lys50 carries the N6-acetyllysine modification. Residues Arg92, Pro93, Tyr94, Val109, Lys111, and Phe114 each contribute to the FAD site. Lys120 carries the post-translational modification N6-acetyllysine. Lys126, Met127, Ser128, and Thr185 together coordinate FAD.

Belongs to the flavoprotein pyridine nucleotide cytochrome reductase family. In terms of assembly, component of a complex composed of cytochrome b5, NADH-cytochrome b5 reductase (CYB5R3) and MTARC2. Interacts with MTLN; the interaction is required to maintain cellular lipid composition and leads to stimulation of mitochondrial respiratory complex I activity. It depends on FAD as a cofactor.

It is found in the endoplasmic reticulum membrane. The protein localises to the mitochondrion outer membrane. It catalyses the reaction 2 Fe(III)-[cytochrome b5] + NADH = 2 Fe(II)-[cytochrome b5] + NAD(+) + H(+). Functionally, catalyzes the reduction of two molecules of cytochrome b5 using NADH as the electron donor. This Mus musculus (Mouse) protein is NADH-cytochrome b5 reductase 3.